The following is a 393-amino-acid chain: MIHRGLWLHNLVQSYRVGSSSSSSTLFKLVYRYNSSTSLAKSSLKQSCELSCKSNTEPSNMDWDKLGFKLMPTDYVYSMKCSNEGNFEQGRLELHGNIELSPAAAVLNYGQGIFEGTKAYRKEDGSLLLFRPDQNGVRMRIGAERMCMPSPSVDQFVDAVKQTAIANRRWVPPSGKGSLYIRPLLMGTGAVLGVAPAPQYTFLAYASPVGNYFKEGLAPLRLYVEDEFDRASPGGTGFVKTIGNYSRCLAALSRAKNKGFSDVLFLDSVHKKYVEELSSCNIFIVQGNQISTPAANGTILSGVTRSSIIEIARDHGFKVEERKIAVDELMEAEEVFCTGTAVGVASVGSITYHNKRVEFKTGSQSVSQKFYSTLIGIQTGVVEDKKGWIVEID.

The transit peptide at 1 to 34 (MIHRGLWLHNLVQSYRVGSSSSSSTLFKLVYRYN) directs the protein to the mitochondrion. Arg-138 lines the pyridoxal 5'-phosphate pocket. Lys-240 functions as the Proton acceptor in the catalytic mechanism. N6-(pyridoxal phosphate)lysine is present on Lys-240. Glu-276 is a pyridoxal 5'-phosphate binding site.

It belongs to the class-IV pyridoxal-phosphate-dependent aminotransferase family. Requires pyridoxal 5'-phosphate as cofactor. Expressed specifically in lupulin glands.

The protein localises to the mitochondrion. It catalyses the reaction L-isoleucine + 2-oxoglutarate = (S)-3-methyl-2-oxopentanoate + L-glutamate. The catalysed reaction is L-leucine + 2-oxoglutarate = 4-methyl-2-oxopentanoate + L-glutamate. The enzyme catalyses L-valine + 2-oxoglutarate = 3-methyl-2-oxobutanoate + L-glutamate. The protein operates within amino-acid biosynthesis; L-isoleucine biosynthesis; L-isoleucine from 2-oxobutanoate: step 4/4. It participates in amino-acid biosynthesis; L-leucine biosynthesis; L-leucine from 3-methyl-2-oxobutanoate: step 4/4. Its pathway is amino-acid biosynthesis; L-valine biosynthesis; L-valine from pyruvate: step 4/4. Its function is as follows. Converts 2-oxo acids to branched-chain amino acids (BCAA). Shows no kinetic preferences corresponding to anabolic or catabolic functions, but likely involved in BCAA catabolism. This Humulus lupulus (European hop) protein is Branched-chain amino acid aminotransferase 1, mitochondrial.